Reading from the N-terminus, the 141-residue chain is Cystatin (141 aa).

The first 26 residues, Met-1–Met-26, serve as a signal peptide directing secretion. One can recognise a Cystatin domain in the interval Gly-29–Trp-129. The Secondary area of contact signature appears at Gln-73–Gly-77. 2 disulfides stabilise this stretch: Cys-91–Cys-107 and Cys-120–Cys-140.

The protein belongs to the cystatin family. Expressed at a low level by the venom gland (at protein level).

It localises to the secreted. Inhibits various C1 cysteine proteases including cathepsin L, papain and cathepsin B. This protein has no toxic activity and its function in the venom is unknown. It may play a role as a housekeeping or regulatory protein. The polypeptide is Cystatin (Oxyuranus scutellatus scutellatus (Australian taipan)).